Consider the following 181-residue polypeptide: Adenine phosphoribosyltransferase (181 aa).

This sequence belongs to the purine/pyrimidine phosphoribosyltransferase family. Homodimer.

The protein localises to the cytoplasm. The enzyme catalyses AMP + diphosphate = 5-phospho-alpha-D-ribose 1-diphosphate + adenine. The protein operates within purine metabolism; AMP biosynthesis via salvage pathway; AMP from adenine: step 1/1. Catalyzes a salvage reaction resulting in the formation of AMP, that is energically less costly than de novo synthesis. This is Adenine phosphoribosyltransferase from Vibrio campbellii (strain ATCC BAA-1116).